The sequence spans 91 residues: uncharacterized protein (91 aa).

3 helical membrane-spanning segments follow: residues 6 to 26 (AAAVFSITIPIISAILIINFF), 37 to 57 (MPVFFPLLLSPIGIILAFVSI), and 68 to 88 (IVLNAIMFPFPFFWFIGGALL).

Its subcellular location is the cell membrane. This is an uncharacterized protein from Bacillus subtilis (strain 168).